Here is a 194-residue protein sequence, read N- to C-terminus: RFKKIRRLGALPGLTSKRPRSGSDPKNQLRSGKKSQYRIRLEEKQKLRFHYGLTERQLLKYVHIAGKAKGSTGQVLLQLLEMRLDNILFRLGMASTIPGARQLVTHRHILVNGRIMDIPSYRCKPRDIITTKDKQRSKALIQNYIASSPQEELPNHLTIDPIQYKGLVNQIIDSKWIGLKINELLVVEYYSRQT.

Residues Gly-13–Gln-36 are disordered. One can recognise an S4 RNA-binding domain in the interval Met-82 to Asn-143.

This sequence belongs to the universal ribosomal protein uS4 family. In terms of assembly, part of the 30S ribosomal subunit. Contacts protein S5. The interaction surface between S4 and S5 is involved in control of translational fidelity.

It is found in the plastid. The protein localises to the chloroplast. One of the primary rRNA binding proteins, it binds directly to 16S rRNA where it nucleates assembly of the body of the 30S subunit. In terms of biological role, with S5 and S12 plays an important role in translational accuracy. This is Small ribosomal subunit protein uS4c (rps4) from Moraea spathulata (Large yellow moraea).